Reading from the N-terminus, the 347-residue chain is Ribosomal RNA large subunit methyltransferase M (347 aa).

Residues Ser-184, 217 to 220 (APGG), Asp-236, Asp-256, and Asp-272 contribute to the S-adenosyl-L-methionine site. Lys-301 (proton acceptor) is an active-site residue.

Belongs to the class I-like SAM-binding methyltransferase superfamily. RNA methyltransferase RlmE family. RlmM subfamily. Monomer.

The protein resides in the cytoplasm. It catalyses the reaction cytidine(2498) in 23S rRNA + S-adenosyl-L-methionine = 2'-O-methylcytidine(2498) in 23S rRNA + S-adenosyl-L-homocysteine + H(+). Its function is as follows. Catalyzes the 2'-O-methylation at nucleotide C2498 in 23S rRNA. The polypeptide is Ribosomal RNA large subunit methyltransferase M (Xanthomonas oryzae pv. oryzae (strain KACC10331 / KXO85)).